The following is a 255-amino-acid chain: Fasciclin-like arabinogalactan protein 14 (255 aa).

An N-terminal signal peptide occupies residues 1-23 (MSSSLTIFFFFFASTFLYTSSNS). The FAS1 domain occupies 24 to 169 (FNITNILNEH…ISVLHISSAI (146 aa)). N-linked (GlcNAc...) asparagine glycosylation is found at Asn25, Asn99, Asn125, and Asn159. The disordered stretch occupies residues 179-231 (PTASPLSPVSSPPRPAESPNDDGQDFDEPPSSAPGAAADEPSENAGSANGVSR). Residues 197 to 206 (PNDDGQDFDE) are compositionally biased toward acidic residues. The segment covering 222–231 (NAGSANGVSR) has biased composition (polar residues). The GPI-anchor amidated serine moiety is linked to residue Ser225. Positions 226 to 255 (ANGVSRNDSQPAFAFTLLMSFIWWFMARLR) are cleaved as a propeptide — removed in mature form.

This sequence belongs to the fasciclin-like AGP family.

The protein localises to the cell membrane. May be a cell surface adhesion protein. This is Fasciclin-like arabinogalactan protein 14 (FLA14) from Arabidopsis thaliana (Mouse-ear cress).